The chain runs to 356 residues: HTH-type transcriptional regulator AglR (356 aa).

Residues 1 to 57 (MPVNLKQLAELLGLSQTTVSRALNGYPEVNAETRARVLEAVRETGYRPNRAAQRLAT) enclose the HTH lacI-type domain. Positions 5–24 (LKQLAELLGLSQTTVSRALN) form a DNA-binding region, H-T-H motif. A disordered region spans residues 337 to 356 (TGPAPDRSPLPNPSPQVGGA).

In terms of biological role, probable regulatory protein for the binding-protein-dependent transport system for alpha-glucosides such as sucrose, maltose and trehalose. This Rhizobium meliloti (strain 1021) (Ensifer meliloti) protein is HTH-type transcriptional regulator AglR (aglR).